The sequence spans 249 residues: Zinc finger AN1 and C2H2 domain-containing stress-associated protein 13 (249 aa).

AN1-type zinc fingers lie at residues proline 7–valine 55 and alanine 95–serine 145. Zn(2+) contacts are provided by cysteine 13, cysteine 18, cysteine 28, cysteine 31, cysteine 36, histidine 39, histidine 45, cysteine 47, cysteine 101, cysteine 106, cysteine 118, cysteine 121, cysteine 126, histidine 129, histidine 135, and cysteine 137. Positions phenylalanine 194–asparagine 213 are disordered. Residues asparagine 201 to glycine 210 are compositionally biased toward basic and acidic residues. Residues aspartate 220–histidine 243 form a C2H2-type zinc finger.

In terms of biological role, may be involved in environmental stress response. The polypeptide is Zinc finger AN1 and C2H2 domain-containing stress-associated protein 13 (SAP13) (Arabidopsis thaliana (Mouse-ear cress)).